Reading from the N-terminus, the 277-residue chain is Carbonyl reductase [NADPH] 1 (277 aa).

Residues 10–34, 63–64, and Asn90 contribute to the NADP(+) site; these read VTGS…GEVV and DI. Ser30 carries the post-translational modification Phosphoserine. Residues 95–97 and Gln106 contribute to the glutathione site; that span reads FKV. Ser140 serves as a coordination point for substrate. Position 193-194 (193-194) interacts with glutathione; it reads AY. The Proton acceptor role is filled by Tyr194. NADP(+) is bound by residues 194–198 and 231–233; these read YGVTK and VRT.

The protein belongs to the short-chain dehydrogenases/reductases (SDR) family. In terms of assembly, monomer.

The protein localises to the cytoplasm. The enzyme catalyses a secondary alcohol + NADP(+) = a ketone + NADPH + H(+). It catalyses the reaction prostaglandin F2alpha + NADP(+) = prostaglandin E2 + NADPH + H(+). It carries out the reaction prostaglandin E1 + NADP(+) = 15-oxoprostaglandin E1 + NADPH + H(+). The catalysed reaction is prostaglandin D2 + NADP(+) = 15-oxoprostaglandin D2 + NADPH + H(+). The enzyme catalyses menadione + NADPH + H(+) = menadiol + NADP(+). It catalyses the reaction prostaglandin E2 + NADP(+) = 15-oxoprostaglandin E2 + NADPH + H(+). It carries out the reaction prostaglandin F2alpha + NADP(+) = 15-oxoprostaglandin F2alpha + NADPH + H(+). The catalysed reaction is daunorubicin + NADPH + H(+) = 13-dihydrodaunorubicin + NADP(+). The enzyme catalyses S-nitrosoglutathione + NADPH + H(+) = S-(hydroxysulfenamide)glutathione + NADP(+). It catalyses the reaction a primary alcohol + NADP(+) = an aldehyde + NADPH + H(+). It carries out the reaction cortisol + NADPH + H(+) = 20beta-dihydrocortisol + NADP(+). The catalysed reaction is corticosterone + NADPH + H(+) = 20beta-dihydrocorticosterone + NADP(+). Its function is as follows. NADPH-dependent reductase with broad substrate specificity. Catalyzes the reduction of a wide variety of carbonyl compounds including quinones, prostaglandins, menadione, plus various xenobiotics. Catalyzes the reduction of the antitumor anthracyclines doxorubicin and daunorubicin to the cardiotoxic compounds doxorubicinol and daunorubicinol. Can convert prostaglandin E to prostaglandin F2-alpha. Can bind glutathione, which explains its higher affinity for glutathione-conjugated substrates. Catalyzes the reduction of S-nitrosoglutathione. In addition, participates in the glucocorticoid metabolism by catalyzing the NADPH-dependent cortisol/corticosterone into 20beta-dihydrocortisol (20b-DHF) or 20beta-corticosterone (20b-DHB), which are weak agonists of NR3C1 and NR3C2 in adipose tissue. The polypeptide is Carbonyl reductase [NADPH] 1 (Macaca fascicularis (Crab-eating macaque)).